Here is a 239-residue protein sequence, read N- to C-terminus: Ribose-5-phosphate isomerase A (239 aa).

Residues 40–43, 96–99, and 110–113 each bind substrate; these read SGST, DGAD, and KGGG. The active-site Proton acceptor is the glutamate 119. Substrate is bound at residue lysine 137.

This sequence belongs to the ribose 5-phosphate isomerase family. In terms of assembly, homodimer.

It catalyses the reaction aldehydo-D-ribose 5-phosphate = D-ribulose 5-phosphate. The protein operates within carbohydrate degradation; pentose phosphate pathway; D-ribose 5-phosphate from D-ribulose 5-phosphate (non-oxidative stage): step 1/1. Its function is as follows. Catalyzes the reversible conversion of ribose-5-phosphate to ribulose 5-phosphate. The protein is Ribose-5-phosphate isomerase A of Methanococcus maripaludis (strain C6 / ATCC BAA-1332).